Consider the following 206-residue polypeptide: Large ribosomal subunit protein uL4 (206 aa).

The interval Thr-48–Asn-78 is disordered.

This sequence belongs to the universal ribosomal protein uL4 family. Part of the 50S ribosomal subunit.

Functionally, one of the primary rRNA binding proteins, this protein initially binds near the 5'-end of the 23S rRNA. It is important during the early stages of 50S assembly. It makes multiple contacts with different domains of the 23S rRNA in the assembled 50S subunit and ribosome. Forms part of the polypeptide exit tunnel. The sequence is that of Large ribosomal subunit protein uL4 from Lawsonia intracellularis (strain PHE/MN1-00).